We begin with the raw amino-acid sequence, 98 residues long: Ferredoxin-like protein (98 aa).

This sequence to ferredoxins from P.putida and C.tartarivorum, ferredoxin I from A.vinelandii, ferredoxin II from D.desulfuricans.

In terms of biological role, could be a 3Fe-4S cluster-containing protein. In Rhizobium leguminosarum, this protein is Ferredoxin-like protein (fixX).